Reading from the N-terminus, the 29-residue chain is Dermaseptin-H7 (29 aa).

The residue at position 29 (Leu-29) is a Leucine amide.

Belongs to the frog skin active peptide (FSAP) family. Dermaseptin subfamily. In terms of tissue distribution, expressed by the skin glands.

The protein resides in the secreted. Has antibacterial activity against the Gram-negative bacterium E.coli and the Gram-positive bacterium S.aureus. Has antiprotozoal activity against L.amazonensis. Has antifungal activity. Has no hemolytic activity. The polypeptide is Dermaseptin-H7 (Pithecopus hypochondrialis (Orange-legged leaf frog)).